Here is a 92-residue protein sequence, read N- to C-terminus: Beta-2-microglobulin (92 aa).

One can recognise an Ig-like C1-type domain in the interval 2 to 89 (PQIQVYSRHP…NHVSMDKPMT (88 aa)). A disulfide bridge connects residues Cys22 and Cys77.

Belongs to the beta-2-microglobulin family. As to quaternary structure, heterodimer of an alpha chain and a beta chain. Beta-2-microglobulin is the beta-chain of major histocompatibility complex class I molecules.

The protein resides in the secreted. Component of the class I major histocompatibility complex (MHC). Involved in the presentation of peptide antigens to the immune system. This chain is Beta-2-microglobulin (B2m), found in Mus spretus (Western Mediterranean mouse).